The following is a 201-amino-acid chain: MIGAVLAGGRGRRFGGDKLLFRISGKPLLLYTIERLEQAEKIDEIVLVASKENAEKLRDFGHDVVVDELMIGPMGGIFTALSLGDAFVVAGDMPLLVPEFIDFIVERFEEAKKPACVPRWSNGYLEPLHAAYSSSFRDFLEERIKSRNYAINQAIRESDACYIEIEKLPEGWRESFFNVNTREDLRRLTPLRTRDNPDTLR.

GTP-binding positions include 6–8, K18, D67, and D92; that span reads LAG. D92 lines the Mg(2+) pocket.

This sequence belongs to the MobA family. Mg(2+) is required as a cofactor.

It localises to the cytoplasm. It carries out the reaction Mo-molybdopterin + GTP + H(+) = Mo-molybdopterin guanine dinucleotide + diphosphate. In terms of biological role, transfers a GMP moiety from GTP to Mo-molybdopterin (Mo-MPT) cofactor (Moco or molybdenum cofactor) to form Mo-molybdopterin guanine dinucleotide (Mo-MGD) cofactor. In Thermococcus kodakarensis (strain ATCC BAA-918 / JCM 12380 / KOD1) (Pyrococcus kodakaraensis (strain KOD1)), this protein is Probable molybdenum cofactor guanylyltransferase.